Here is a 141-residue protein sequence, read N- to C-terminus: Hemoglobin subunit alpha (141 aa).

Positions 1-141 constitute a Globin domain; that stretch reads VLSPADKTNV…VSTVLTSKYR (141 aa). S3 bears the Phosphoserine mark. The residue at position 7 (K7) is an N6-succinyllysine. T8 bears the Phosphothreonine mark. K11 is modified (N6-succinyllysine). K16 carries the post-translational modification N6-acetyllysine; alternate. K16 is modified (N6-succinyllysine; alternate). Position 35 is a phosphoserine (S35). Position 40 is an N6-succinyllysine (K40). H58 lines the O2 pocket. Heme b is bound at residue H87. Residue S102 is modified to Phosphoserine. The residue at position 108 (T108) is a Phosphothreonine. A phosphoserine mark is found at S124 and S131. Phosphothreonine is present on residues T134 and T137. Phosphoserine is present on S138.

Belongs to the globin family. As to quaternary structure, heterotetramer of two alpha chains and two beta chains. In terms of tissue distribution, red blood cells.

Involved in oxygen transport from the lung to the various peripheral tissues. In terms of biological role, hemopressin acts as an antagonist peptide of the cannabinoid receptor CNR1. Hemopressin-binding efficiently blocks cannabinoid receptor CNR1 and subsequent signaling. The protein is Hemoglobin subunit alpha (HBA) of Physeter macrocephalus (Sperm whale).